A 318-amino-acid chain; its full sequence is 4-diphosphocytidyl-2-C-methyl-D-erythritol kinase (318 aa).

The active site involves Lys-13. 101–111 (PVAGGMAGGSA) contributes to the ATP binding site. Residue Asp-143 is part of the active site. Residues 298–318 (PGARLVTDDRADRPTPPQVHA) form a disordered region.

Belongs to the GHMP kinase family. IspE subfamily.

The catalysed reaction is 4-CDP-2-C-methyl-D-erythritol + ATP = 4-CDP-2-C-methyl-D-erythritol 2-phosphate + ADP + H(+). It functions in the pathway isoprenoid biosynthesis; isopentenyl diphosphate biosynthesis via DXP pathway; isopentenyl diphosphate from 1-deoxy-D-xylulose 5-phosphate: step 3/6. Catalyzes the phosphorylation of the position 2 hydroxy group of 4-diphosphocytidyl-2C-methyl-D-erythritol. The polypeptide is 4-diphosphocytidyl-2-C-methyl-D-erythritol kinase (Saccharopolyspora erythraea (strain ATCC 11635 / DSM 40517 / JCM 4748 / NBRC 13426 / NCIMB 8594 / NRRL 2338)).